Here is a 485-residue protein sequence, read N- to C-terminus: Probable cobyric acid synthase (485 aa).

The 186-residue stretch at 250 to 435 folds into the GATase cobBQ-type domain; sequence EIEIAVIRLP…LHGLFDNKNI (186 aa). The Nucleophile role is filled by Cys328. The active site involves His427.

This sequence belongs to the CobB/CobQ family. CobQ subfamily.

It functions in the pathway cofactor biosynthesis; adenosylcobalamin biosynthesis. In terms of biological role, catalyzes amidations at positions B, D, E, and G on adenosylcobyrinic A,C-diamide. NH(2) groups are provided by glutamine, and one molecule of ATP is hydrogenolyzed for each amidation. This is Probable cobyric acid synthase from Methanosarcina barkeri (strain Fusaro / DSM 804).